A 166-amino-acid chain; its full sequence is Ribosome maturation factor RimM (166 aa).

Positions 95–164 (EEEYYAYELV…KKIIVKEELL (70 aa)) constitute a PRC barrel domain.

It belongs to the RimM family. In terms of assembly, binds ribosomal protein uS19.

It localises to the cytoplasm. An accessory protein needed during the final step in the assembly of 30S ribosomal subunit, possibly for assembly of the head region. Essential for efficient processing of 16S rRNA. May be needed both before and after RbfA during the maturation of 16S rRNA. It has affinity for free ribosomal 30S subunits but not for 70S ribosomes. The polypeptide is Ribosome maturation factor RimM (Aquifex aeolicus (strain VF5)).